The primary structure comprises 136 residues: Cytidine deaminase (136 aa).

One can recognise a CMP/dCMP-type deaminase domain in the interval 1 to 128; the sequence is MNRQELITEA…ELLPGAFSSE (128 aa). 42-44 contacts substrate; that stretch reads NIE. A Zn(2+)-binding site is contributed by C53. E55 (proton donor) is an active-site residue. 2 residues coordinate Zn(2+): C86 and C89.

The protein belongs to the cytidine and deoxycytidylate deaminase family. As to quaternary structure, homotetramer. Requires Zn(2+) as cofactor.

It catalyses the reaction cytidine + H2O + H(+) = uridine + NH4(+). The catalysed reaction is 2'-deoxycytidine + H2O + H(+) = 2'-deoxyuridine + NH4(+). Functionally, this enzyme scavenges exogenous and endogenous cytidine and 2'-deoxycytidine for UMP synthesis. This is Cytidine deaminase (cdd) from Bacillus subtilis (strain 168).